Consider the following 263-residue polypeptide: Type III pantothenate kinase (263 aa).

6–13 (DVGNTRIK) lines the ATP pocket. Residues tyrosine 92 and 99-102 (GTDR) each bind substrate. Catalysis depends on aspartate 101, which acts as the Proton acceptor. An ATP-binding site is contributed by threonine 124. Threonine 174 lines the substrate pocket.

This sequence belongs to the type III pantothenate kinase family. Homodimer. NH4(+) is required as a cofactor. The cofactor is K(+).

Its subcellular location is the cytoplasm. The catalysed reaction is (R)-pantothenate + ATP = (R)-4'-phosphopantothenate + ADP + H(+). It functions in the pathway cofactor biosynthesis; coenzyme A biosynthesis; CoA from (R)-pantothenate: step 1/5. In terms of biological role, catalyzes the phosphorylation of pantothenate (Pan), the first step in CoA biosynthesis. The protein is Type III pantothenate kinase of Azoarcus sp. (strain BH72).